The primary structure comprises 245 residues: 3-dehydroquinate dehydratase (245 aa).

3-dehydroquinate-binding positions include 35-37 (EFR) and Arg-70. His-132 serves as the catalytic Proton donor/acceptor. Catalysis depends on Lys-158, which acts as the Schiff-base intermediate with substrate. 3 residues coordinate 3-dehydroquinate: Arg-199, Thr-220, and Gln-224.

It belongs to the type-I 3-dehydroquinase family. As to quaternary structure, homodimer.

It carries out the reaction 3-dehydroquinate = 3-dehydroshikimate + H2O. It participates in metabolic intermediate biosynthesis; chorismate biosynthesis; chorismate from D-erythrose 4-phosphate and phosphoenolpyruvate: step 3/7. Its function is as follows. Involved in the third step of the chorismate pathway, which leads to the biosynthesis of aromatic amino acids. Catalyzes the cis-dehydration of 3-dehydroquinate (DHQ) and introduces the first double bond of the aromatic ring to yield 3-dehydroshikimate. This Haloquadratum walsbyi (strain DSM 16790 / HBSQ001) protein is 3-dehydroquinate dehydratase.